Consider the following 842-residue polypeptide: Cation/H(+) antiporter 20 (842 aa).

12 consecutive transmembrane segments (helical) span residues 26–46 (FPLL…LAVL), 55–75 (VIAE…RNMA), 86–106 (MPIL…LVGL), 122–142 (GIAV…AFVI), 155–175 (YAEF…PVLA), 193–213 (MAAA…AVAL), 228–248 (LVSL…LVVI), 283–303 (FATD…GLTI), 320–340 (FVSG…TDVA), 353–373 (LVVV…AVMV), 380–400 (ALTL…VLNI), and 413–433 (AILV…VMAI). Residues 585–595 (DHGHSHHHQDG) are compositionally biased toward basic and acidic residues. The segment at 585 to 605 (DHGHSHHHQDGGGDGNVPENV) is disordered.

The protein belongs to the monovalent cation:proton antiporter 2 (CPA2) transporter (TC 2.A.37) family. CHX (TC 2.A.37.4) subfamily. In terms of tissue distribution, expressed in leaves and stems. Preferentially expressed in guards cells.

The protein resides in the endomembrane system. In terms of biological role, operates as a K(+)/H(+) antiporter that maintains K(+) homeostasis in guard cells and could regulate pH. Plays a critical role in osmoregulation through the control of stomates opening. In Arabidopsis thaliana (Mouse-ear cress), this protein is Cation/H(+) antiporter 20 (CHX20).